The following is a 311-amino-acid chain: Giardin subunit gamma (311 aa).

The stretch at 185 to 233 (GLQTEINSLEAIIEREFAQAANRLNQEVSNFKESFDASERNIKLQKKHV) forms a coiled coil.

In terms of assembly, interacts with EB1.

It localises to the cytoplasm. The protein resides in the cytoskeleton. Its function is as follows. Giardins are involved in parasite attachment to the intestinal mucosa and in the cytoskeletal disassembly and reassembly that marks the transition from infectious trophozoite to transmissible cyst. They may interact with other cytoskeletal proteins such as microtubules in the microribbons or crossbridges, to maintain the integrity of the ventral disk. Involved in formation of the ventral disk. The sequence is that of Giardin subunit gamma from Giardia intestinalis (Giardia lamblia).